Consider the following 213-residue polypeptide: Pyridoxine/pyridoxamine 5'-phosphate oxidase (213 aa).

Substrate contacts are provided by residues 8 to 11 and K66; that span reads RQEY. Residues 61–66, 76–77, R82, K83, and Q105 each bind FMN; these read RTVLLK and YT. The substrate site is built by Y123, R127, and S131. Residues 140–141 and W185 each bind FMN; that span reads QS. 191-193 provides a ligand contact to substrate; that stretch reads RLH. Residue R195 coordinates FMN.

The protein belongs to the pyridoxamine 5'-phosphate oxidase family. In terms of assembly, homodimer. FMN is required as a cofactor.

It catalyses the reaction pyridoxamine 5'-phosphate + O2 + H2O = pyridoxal 5'-phosphate + H2O2 + NH4(+). It carries out the reaction pyridoxine 5'-phosphate + O2 = pyridoxal 5'-phosphate + H2O2. Its pathway is cofactor metabolism; pyridoxal 5'-phosphate salvage; pyridoxal 5'-phosphate from pyridoxamine 5'-phosphate: step 1/1. It functions in the pathway cofactor metabolism; pyridoxal 5'-phosphate salvage; pyridoxal 5'-phosphate from pyridoxine 5'-phosphate: step 1/1. Catalyzes the oxidation of either pyridoxine 5'-phosphate (PNP) or pyridoxamine 5'-phosphate (PMP) into pyridoxal 5'-phosphate (PLP). The polypeptide is Pyridoxine/pyridoxamine 5'-phosphate oxidase (Bacteroides thetaiotaomicron (strain ATCC 29148 / DSM 2079 / JCM 5827 / CCUG 10774 / NCTC 10582 / VPI-5482 / E50)).